Consider the following 428-residue polypeptide: Elongation factor 1-alpha (428 aa).

The 213-residue stretch at 5-217 (KPHVNIVFIG…DQIPEPEKPI (213 aa)) folds into the tr-type G domain. The interval 14-21 (GHVDHGKS) is G1. 14–21 (GHVDHGKS) provides a ligand contact to GTP. S21 contacts Mg(2+). The tract at residues 68–72 (GITID) is G2. Residues 89-92 (DAPG) are G3. Residues 89 to 93 (DAPGH) and 144 to 147 (NKMD) each bind GTP. A G4 region spans residues 144 to 147 (NKMD). The interval 181–183 (SAW) is G5.

Belongs to the TRAFAC class translation factor GTPase superfamily. Classic translation factor GTPase family. EF-Tu/EF-1A subfamily.

It is found in the cytoplasm. It catalyses the reaction GTP + H2O = GDP + phosphate + H(+). In terms of biological role, GTP hydrolase that promotes the GTP-dependent binding of aminoacyl-tRNA to the A-site of ribosomes during protein biosynthesis. The chain is Elongation factor 1-alpha from Pyrococcus horikoshii (strain ATCC 700860 / DSM 12428 / JCM 9974 / NBRC 100139 / OT-3).